We begin with the raw amino-acid sequence, 113 residues long: MTDTHSIAQPLEAEVSPANNRQLTVSYASRYPDYSRIPAITLKGQWLEAAGFATGTAVDVKVMEGCIVLTAQPAAAEESELMQSLRKVCKLSARKQRQVQEFIGVITGKQKVA.

Residues 29–74 (SRYPDYSRIPAITLKGQWLEAAGFATGTAVDVKVMEGCIVLTAQPA) form the SpoVT-AbrB domain.

The protein belongs to the SymE family.

Its subcellular location is the cytoplasm. Involved in the degradation and recycling of damaged RNA. It is itself a target for degradation by the ATP-dependent protease Lon. This is Endoribonuclease SymE from Shigella flexneri serotype 5b (strain 8401).